Reading from the N-terminus, the 224-residue chain is Non-structural protein 3 (224 aa).

A CoV 3a-like viroporin TM domain is found at 34–124 (NVVPIRQASN…RYKNALFIIF (91 aa)). Transmembrane regions (helical) follow at residues 40 to 60 (QASN…FALF), 69 to 88 (YIML…LLYY), and 95 to 111 (ATII…LVCF). One can recognise a CoV 3a-like viroporin CD domain in the interval 128–203 (TLSFLNGKAA…KLYVFSQHQI (76 aa)).

The protein localises to the host membrane. The sequence is that of Non-structural protein 3 from Sus scrofa (Pig).